Reading from the N-terminus, the 374-residue chain is Peptide chain release factor 2 (374 aa).

An N5-methylglutamine modification is found at glutamine 252.

The protein belongs to the prokaryotic/mitochondrial release factor family. In terms of processing, methylated by PrmC. Methylation increases the termination efficiency of RF2.

The protein localises to the cytoplasm. Peptide chain release factor 2 directs the termination of translation in response to the peptide chain termination codons UGA and UAA. The sequence is that of Peptide chain release factor 2 from Xanthomonas euvesicatoria pv. vesicatoria (strain 85-10) (Xanthomonas campestris pv. vesicatoria).